The following is a 506-amino-acid chain: ATP synthase subunit alpha, chloroplastic (506 aa).

170 to 177 is a binding site for ATP; it reads GDRQTGKT.

It belongs to the ATPase alpha/beta chains family. F-type ATPases have 2 components, CF(1) - the catalytic core - and CF(0) - the membrane proton channel. CF(1) has five subunits: alpha(3), beta(3), gamma(1), delta(1), epsilon(1). CF(0) has four main subunits: a, b, b' and c.

It is found in the plastid. It localises to the chloroplast thylakoid membrane. The catalysed reaction is ATP + H2O + 4 H(+)(in) = ADP + phosphate + 5 H(+)(out). In terms of biological role, produces ATP from ADP in the presence of a proton gradient across the membrane. The alpha chain is a regulatory subunit. This Chlorokybus atmophyticus (Soil alga) protein is ATP synthase subunit alpha, chloroplastic.